Consider the following 110-residue polypeptide: IQ domain-containing protein J (110 aa).

One can recognise an IQ domain in the interval 47–67 (ESKVKIIQRAWREYLQRQDPL). The disordered stretch occupies residues 63–99 (RQDPLEKRSPSPPSVSSDKLSSSVSMNTFSDSSTPVS). Residues 76–87 (SVSSDKLSSSVS) show a composition bias toward low complexity. A compositionally biased stretch (polar residues) spans 88-99 (MNTFSDSSTPVS).

In Mus musculus (Mouse), this protein is IQ domain-containing protein J.